We begin with the raw amino-acid sequence, 130 residues long: Small ribosomal subunit protein uS8 (130 aa).

The protein belongs to the universal ribosomal protein uS8 family. As to quaternary structure, part of the 30S ribosomal subunit. Contacts proteins S5 and S12.

In terms of biological role, one of the primary rRNA binding proteins, it binds directly to 16S rRNA central domain where it helps coordinate assembly of the platform of the 30S subunit. This chain is Small ribosomal subunit protein uS8, found in Ruegeria pomeroyi (strain ATCC 700808 / DSM 15171 / DSS-3) (Silicibacter pomeroyi).